Here is a 175-residue protein sequence, read N- to C-terminus: Clathrin-associated protein AP-3 complex component APS3 (175 aa).

This sequence belongs to the adaptor complexes small subunit family. In terms of assembly, adaptor protein complex 3 (AP-3) is a heterotetramer composed of 2 large adaptins, a medium adaptin and a small adaptin.

It localises to the golgi apparatus. The protein localises to the cytoplasmic vesicle membrane. In terms of biological role, part of the AP-3 complex, an adapter-related complex which is not clathrin-associated. The complex is associated with the Golgi region as well as more peripheral structures. It facilitates the budding of vesicles from the Golgi membrane. Involved in vacuolar trafficking and contributes to hyphal growth and pathogenesis. The polypeptide is Clathrin-associated protein AP-3 complex component APS3 (APS3) (Candida albicans (strain SC5314 / ATCC MYA-2876) (Yeast)).